Reading from the N-terminus, the 171-residue chain is dCTP pyrophosphatase (171 aa).

It carries out the reaction dCTP + H2O = dCMP + diphosphate + H(+). The chain is dCTP pyrophosphatase (56) from Enterobacteria phage T4 (Bacteriophage T4).